The primary structure comprises 365 residues: Formamidopyrimidine-DNA glycosylase (365 aa).

Catalysis depends on proline 2, which acts as the Schiff-base intermediate with DNA. Glutamate 3 (proton donor) is an active-site residue. Lysine 61 acts as the Proton donor; for beta-elimination activity in catalysis. The tract at residues 121–150 (RGRLAGHGDGMDGTSRTGSTLPGTGGTENS) is disordered. Polar residues predominate over residues 134-150 (TSRTGSTLPGTGGTENS). Histidine 186, arginine 205, and arginine 246 together coordinate DNA. The FPG-type zinc-finger motif lies at 331-365 (RVYGRGGQPCRHCGTTLATAQVAGRTTVFCPQCQR). Arginine 355 (proton donor; for delta-elimination activity) is an active-site residue.

Belongs to the FPG family. As to quaternary structure, monomer. The cofactor is Zn(2+).

The catalysed reaction is Hydrolysis of DNA containing ring-opened 7-methylguanine residues, releasing 2,6-diamino-4-hydroxy-5-(N-methyl)formamidopyrimidine.. It catalyses the reaction 2'-deoxyribonucleotide-(2'-deoxyribose 5'-phosphate)-2'-deoxyribonucleotide-DNA = a 3'-end 2'-deoxyribonucleotide-(2,3-dehydro-2,3-deoxyribose 5'-phosphate)-DNA + a 5'-end 5'-phospho-2'-deoxyribonucleoside-DNA + H(+). Functionally, involved in base excision repair of DNA damaged by oxidation or by mutagenic agents. Acts as a DNA glycosylase that recognizes and removes damaged bases. Has a preference for oxidized purines, such as 7,8-dihydro-8-oxoguanine (8-oxoG). Has AP (apurinic/apyrimidinic) lyase activity and introduces nicks in the DNA strand. Cleaves the DNA backbone by beta-delta elimination to generate a single-strand break at the site of the removed base with both 3'- and 5'-phosphates. The chain is Formamidopyrimidine-DNA glycosylase from Nitratidesulfovibrio vulgaris (strain ATCC 29579 / DSM 644 / CCUG 34227 / NCIMB 8303 / VKM B-1760 / Hildenborough) (Desulfovibrio vulgaris).